Consider the following 325-residue polypeptide: NADH-quinone oxidoreductase subunit H (325 aa).

Helical transmembrane passes span 11 to 31, 81 to 101, 114 to 134, 154 to 174, 186 to 206, 237 to 257, 265 to 285, and 304 to 324; these read VIIAVVKALVILFVVVGCGAF, VIFTLAPMIAFTSLLLAMAIV, IGLLFFLMMAGLAVYAVLFAG, LSYEVFLGLSLMGVVAQAGSF, LWNVIPQFLGFLTFCIAGVAV, FFVGEYVGIVTVSALIVTLFF, LPPVIWFALKTAFFMMMFILI, and VCLPLTLLNLLATAAVILYTA.

Belongs to the complex I subunit 1 family. As to quaternary structure, NDH-1 is composed of 13 different subunits. Subunits NuoA, H, J, K, L, M, N constitute the membrane sector of the complex.

It localises to the cell inner membrane. It carries out the reaction a quinone + NADH + 5 H(+)(in) = a quinol + NAD(+) + 4 H(+)(out). In terms of biological role, NDH-1 shuttles electrons from NADH, via FMN and iron-sulfur (Fe-S) centers, to quinones in the respiratory chain. The immediate electron acceptor for the enzyme in this species is believed to be ubiquinone. Couples the redox reaction to proton translocation (for every two electrons transferred, four hydrogen ions are translocated across the cytoplasmic membrane), and thus conserves the redox energy in a proton gradient. This subunit may bind ubiquinone. The sequence is that of NADH-quinone oxidoreductase subunit H from Erwinia tasmaniensis (strain DSM 17950 / CFBP 7177 / CIP 109463 / NCPPB 4357 / Et1/99).